Reading from the N-terminus, the 267-residue chain is Translation initiation factor 2 subunit alpha (267 aa).

One can recognise an S1 motif domain in the interval 12–83 (GELVVATVKE…RKKQVDVSLK (72 aa)).

It belongs to the eIF-2-alpha family. In terms of assembly, heterotrimer composed of an alpha, a beta and a gamma chain.

Functionally, eIF-2 functions in the early steps of protein synthesis by forming a ternary complex with GTP and initiator tRNA. The sequence is that of Translation initiation factor 2 subunit alpha from Hyperthermus butylicus (strain DSM 5456 / JCM 9403 / PLM1-5).